The primary structure comprises 323 residues: Aldo-keto reductase family 1 member C18 (323 aa).

NADP(+) is bound by residues 20-24 (GFGTY) and Asp50. The Proton donor role is filled by Tyr55. Position 117 (His117) interacts with substrate. Residues 166–167 (SN), Gln190, 216–221 (YGALGT), and 270–280 (KSFNEERIREN) each bind NADP(+).

Belongs to the aldo/keto reductase family. Monomer.

It localises to the cytoplasm. It catalyses the reaction (17R,20S)-17,20-dihydroxypregn-4-en-3-one + NADP(+) = 17alpha-hydroxyprogesterone + NADPH + H(+). The enzyme catalyses (17R,20S)-17,20-dihydroxypregn-4-en-3-one + NAD(+) = 17alpha-hydroxyprogesterone + NADH + H(+). Catalyzes the conversion of progesterone into 20-alpha-dihydroprogesterone (20 alpha-OHP). The protein is Aldo-keto reductase family 1 member C18 (Akr1c18) of Mus musculus (Mouse).